We begin with the raw amino-acid sequence, 110 residues long: UPF0060 membrane protein Pfl01_4105 (110 aa).

Transmembrane regions (helical) follow at residues 5–25 (LWFF…WMWL), 28–48 (GKSA…ALLL), 59–79 (AYAA…AVVE), and 84–104 (LGSD…ILFG).

It belongs to the UPF0060 family.

The protein resides in the cell inner membrane. This chain is UPF0060 membrane protein Pfl01_4105, found in Pseudomonas fluorescens (strain Pf0-1).